The sequence spans 94 residues: MPDIRVEVVYALPERQYLRQLVLEEGSTLEQAIHASGLLALRQDIDLSVNKVGIFSRPAKLEDTLSDGDRVEIYRPLLIDPKELRRQRADRTRK.

The protein belongs to the UPF0125 (RnfH) family.

The chain is Protein RnfH from Sodalis glossinidius (strain morsitans).